Reading from the N-terminus, the 300-residue chain is N-acetylmuramic acid 6-phosphate etherase 1 (300 aa).

The SIS domain maps to 57-220 (IATAFAQGGR…TTGAMIKSGK (164 aa)). E85 acts as the Proton donor in catalysis. E116 is an active-site residue.

It belongs to the GCKR-like family. MurNAc-6-P etherase subfamily. Homodimer.

It carries out the reaction N-acetyl-D-muramate 6-phosphate + H2O = N-acetyl-D-glucosamine 6-phosphate + (R)-lactate. Its pathway is amino-sugar metabolism; 1,6-anhydro-N-acetylmuramate degradation. The protein operates within amino-sugar metabolism; N-acetylmuramate degradation. It participates in cell wall biogenesis; peptidoglycan recycling. Functionally, specifically catalyzes the cleavage of the D-lactyl ether substituent of MurNAc 6-phosphate, producing GlcNAc 6-phosphate and D-lactate. Together with AnmK, is also required for the utilization of anhydro-N-acetylmuramic acid (anhMurNAc) either imported from the medium or derived from its own cell wall murein, and thus plays a role in cell wall recycling. The protein is N-acetylmuramic acid 6-phosphate etherase 1 of Vibrio cholerae serotype O1 (strain ATCC 39315 / El Tor Inaba N16961).